A 177-amino-acid chain; its full sequence is TRAF-interacting protein with FHA domain-containing protein A (177 aa).

The 57-residue stretch at 48 to 104 folds into the FHA domain; sequence VAFGRDYNVCRYPLLSNRVSRIQFNLQFFKHFNCSTTAIEIKNLSKKNKLYVDNLEL.

Belongs to the TIFA family. As to quaternary structure, interacts with traf6.

It localises to the cytoplasm. Functionally, adapter molecule that plays a key role in the activation of pro-inflammatory NF-kappa-B signaling following detection of bacterial pathogen-associated molecular pattern metabolites (PAMPs). Promotes activation of an innate immune response by inducing the oligomerization and polyubiquitination of TRAF6, which leads to the activation of TAK1 and IKK through a proteasome-independent mechanism. This is TRAF-interacting protein with FHA domain-containing protein A from Xenopus tropicalis (Western clawed frog).